A 297-amino-acid polypeptide reads, in one-letter code: Mitochondrial substrate carrier family protein P (297 aa).

Solcar repeat units follow at residues 12–98 (KPSW…IKNH), 104–189 (SSSF…LKRI), and 201–293 (ISGT…LSNF). Transmembrane regions (helical) follow at residues 15–35 (WVSFLSGGLAGVTAKSAVAPL), 66–86 (GIKGLWRGNSATILRVFPYAA), 107–127 (FQIFLAGSAAGGIAVCATYPL), 165–185 (IQPTLIGILPYGGISFSTFEF), 207–227 (LIAGGIAGGVAQTVAYPFDVV), and 262–282 (ILALYKGLSINYVKVIPTASI).

This sequence belongs to the mitochondrial carrier (TC 2.A.29) family.

The protein localises to the mitochondrion inner membrane. Functionally, mitochondrial solute carriers shuttle metabolites, nucleotides, and cofactors through the mitochondrial inner membrane. Required for the accumulation of coenzyme A in the mitochondrial matrix. The polypeptide is Mitochondrial substrate carrier family protein P (mcfP) (Dictyostelium discoideum (Social amoeba)).